Consider the following 459-residue polypeptide: Trigger factor (459 aa).

The region spanning 166 to 245 (GDFANIDLTA…VNSVKAEELP (80 aa)) is the PPIase FKBP-type domain.

Belongs to the FKBP-type PPIase family. Tig subfamily.

The protein localises to the cytoplasm. It carries out the reaction [protein]-peptidylproline (omega=180) = [protein]-peptidylproline (omega=0). Functionally, involved in protein export. Acts as a chaperone by maintaining the newly synthesized protein in an open conformation. Functions as a peptidyl-prolyl cis-trans isomerase. This chain is Trigger factor, found in Bifidobacterium longum (strain NCC 2705).